A 188-amino-acid chain; its full sequence is dTTP/UTP pyrophosphatase (188 aa).

D67 functions as the Proton acceptor in the catalytic mechanism.

The protein belongs to the Maf family. YhdE subfamily. A divalent metal cation is required as a cofactor.

It is found in the cytoplasm. It carries out the reaction dTTP + H2O = dTMP + diphosphate + H(+). It catalyses the reaction UTP + H2O = UMP + diphosphate + H(+). In terms of biological role, nucleoside triphosphate pyrophosphatase that hydrolyzes dTTP and UTP. May have a dual role in cell division arrest and in preventing the incorporation of modified nucleotides into cellular nucleic acids. This chain is dTTP/UTP pyrophosphatase, found in Roseobacter denitrificans (strain ATCC 33942 / OCh 114) (Erythrobacter sp. (strain OCh 114)).